A 259-amino-acid polypeptide reads, in one-letter code: Global transcriptional regulator CodY (259 aa).

A GAF domain region spans residues 1–155; the sequence is MALLQKTRII…GATVVGMEIL (155 aa). The segment at residues 203 to 222 is a DNA-binding region (H-T-H motif); it reads ASKIADRVGITRSVIVNALR. A Phosphoserine modification is found at Ser215.

The protein belongs to the CodY family.

The protein localises to the cytoplasm. Functionally, DNA-binding global transcriptional regulator which is involved in the adaptive response to starvation and acts by directly or indirectly controlling the expression of numerous genes in response to nutrient availability. During rapid exponential growth, CodY is highly active and represses genes whose products allow adaptation to nutrient depletion. This Bacillus pumilus (strain SAFR-032) protein is Global transcriptional regulator CodY.